The primary structure comprises 205 residues: High frequency lysogenization protein HflD homolog (205 aa).

This sequence belongs to the HflD family.

Its subcellular location is the cytoplasm. It localises to the cell inner membrane. This chain is High frequency lysogenization protein HflD homolog, found in Alkalilimnicola ehrlichii (strain ATCC BAA-1101 / DSM 17681 / MLHE-1).